We begin with the raw amino-acid sequence, 238 residues long: Probable succinyl-CoA:3-ketoacid coenzyme A transferase subunit A (238 aa).

Residue 24 to 30 (GGFGLCG) coordinates CoA.

This sequence belongs to the 3-oxoacid CoA-transferase subunit A family. As to quaternary structure, heterodimer of a subunit A and a subunit B.

It carries out the reaction a 3-oxo acid + succinyl-CoA = a 3-oxoacyl-CoA + succinate. This chain is Probable succinyl-CoA:3-ketoacid coenzyme A transferase subunit A (scoA), found in Bacillus subtilis (strain 168).